The following is a 99-amino-acid chain: MSNQIIRDHKRRLLVAKYELKRMHYKAICQDRNLPNKIRYEYFFKLSKLPRNSSKTRVRNRCIFTGRPRSVYKLFRISRIVFRELASKGSLIGINKSCW.

It belongs to the universal ribosomal protein uS14 family.

The protein localises to the mitochondrion. In Marchantia polymorpha (Common liverwort), this protein is Small ribosomal subunit protein uS14m (RPS14).